Consider the following 93-residue polypeptide: Probable Fe(2+)-trafficking protein (93 aa).

This sequence belongs to the Fe(2+)-trafficking protein family.

Functionally, could be a mediator in iron transactions between iron acquisition and iron-requiring processes, such as synthesis and/or repair of Fe-S clusters in biosynthetic enzymes. The chain is Probable Fe(2+)-trafficking protein from Acidithiobacillus ferrooxidans (strain ATCC 23270 / DSM 14882 / CIP 104768 / NCIMB 8455) (Ferrobacillus ferrooxidans (strain ATCC 23270)).